A 507-amino-acid polypeptide reads, in one-letter code: ATP synthase subunit alpha, chloroplastic (507 aa).

170-177 (GDRQTGKT) contributes to the ATP binding site.

The protein belongs to the ATPase alpha/beta chains family. As to quaternary structure, F-type ATPases have 2 components, CF(1) - the catalytic core - and CF(0) - the membrane proton channel. CF(1) has five subunits: alpha(3), beta(3), gamma(1), delta(1), epsilon(1). CF(0) has four main subunits: a, b, b' and c.

It localises to the plastid. The protein localises to the chloroplast thylakoid membrane. It carries out the reaction ATP + H2O + 4 H(+)(in) = ADP + phosphate + 5 H(+)(out). Functionally, produces ATP from ADP in the presence of a proton gradient across the membrane. The alpha chain is a regulatory subunit. This is ATP synthase subunit alpha, chloroplastic from Citrus sinensis (Sweet orange).